Consider the following 715-residue polypeptide: Elongation factor G (715 aa).

A tr-type G domain is found at 12–309 (RRVRNIGIMA…GVIDYLPSPL (298 aa)). Residues 21 to 28 (AHIDAGKT), 108 to 112 (DTPGH), and 162 to 165 (NKMD) contribute to the GTP site.

It belongs to the TRAFAC class translation factor GTPase superfamily. Classic translation factor GTPase family. EF-G/EF-2 subfamily.

It is found in the cytoplasm. In terms of biological role, catalyzes the GTP-dependent ribosomal translocation step during translation elongation. During this step, the ribosome changes from the pre-translocational (PRE) to the post-translocational (POST) state as the newly formed A-site-bound peptidyl-tRNA and P-site-bound deacylated tRNA move to the P and E sites, respectively. Catalyzes the coordinated movement of the two tRNA molecules, the mRNA and conformational changes in the ribosome. The chain is Elongation factor G from Rubrobacter xylanophilus (strain DSM 9941 / JCM 11954 / NBRC 16129 / PRD-1).